The following is a 173-amino-acid chain: MSTEPVVFMDIAIDGRLLGRIKIRLFSSIVPKTAENFRQFCTGETLGVNQKPIGYKNSTFHRIIQGFMIQGGDFVSGDGTGSATIFNSRTFPDENFTLKHDRPGLLSMANAGKDSNGCQFFITTVPCDFLDGKHVVFGEVIEGYDIVKEIESTPVGANSRPKSNVAIVECGEM.

One can recognise a PPIase cyclophilin-type domain in the interval 8-172; sequence FMDIAIDGRL…SNVAIVECGE (165 aa).

This sequence belongs to the cyclophilin-type PPIase family. PPIase H subfamily.

It localises to the cytoplasm. The protein localises to the cytoskeleton. Its subcellular location is the microtubule organizing center. It is found in the spindle pole body. The catalysed reaction is [protein]-peptidylproline (omega=180) = [protein]-peptidylproline (omega=0). Functionally, PPIases accelerate the folding of proteins. It catalyzes the cis-trans isomerization of proline imidic peptide bonds in oligopeptides. This is Peptidyl-prolyl cis-trans isomerase cyp3 (cyp3) from Schizosaccharomyces pombe (strain 972 / ATCC 24843) (Fission yeast).